We begin with the raw amino-acid sequence, 551 residues long: Vacuolar protein sorting-associated protein 17 (551 aa).

Residues Met1–Ser100 form a disordered region. 2 stretches are compositionally biased toward polar residues: residues Ala29–Met39 and Thr46–Asn64. Positions Leu108–Tyr227 constitute a PX domain. A coiled-coil region spans residues Ile359 to Asp385. The tract at residues Arg474–Ser504 is disordered. Residues Val480–Ser504 show a composition bias toward polar residues. Ser544 is modified (phosphoserine).

This sequence belongs to the VPS17 family. As to quaternary structure, component of the retromer complex which consists of VPS29, VPS26, VPS35, VPS5 and VPS17. Component of a retromer subcomplex consisting of VPS5 and VPS17. Phosphorylated on one or more serine residues.

It is found in the endomembrane system. In terms of biological role, component of the membrane-associated retromer complex which is essential in endosome-to-Golgi retrograde transport. The VPS5-VPS17 subcomplex may assemble onto the membrane to promote vesicle formation and is required for recycling the vacuolar protein-sorting receptor. Required for the sorting and delivery of a subset of soluble vacuolar hydrolases. Required for retention of late Golgi membrane proteins and vacuolar biogenesis. Involved in vacuolar fragmentation during hyperosmotic stress. The sequence is that of Vacuolar protein sorting-associated protein 17 from Saccharomyces cerevisiae (strain ATCC 204508 / S288c) (Baker's yeast).